A 190-amino-acid polypeptide reads, in one-letter code: Ribosome maturation factor RimM (190 aa).

The 89-residue stretch at 102–190 (EDEYYWIDLV…RIDSDWPLED (89 aa)) folds into the PRC barrel domain.

The protein belongs to the RimM family. As to quaternary structure, binds ribosomal protein uS19.

It localises to the cytoplasm. An accessory protein needed during the final step in the assembly of 30S ribosomal subunit, possibly for assembly of the head region. Essential for efficient processing of 16S rRNA. May be needed both before and after RbfA during the maturation of 16S rRNA. It has affinity for free ribosomal 30S subunits but not for 70S ribosomes. In Bordetella avium (strain 197N), this protein is Ribosome maturation factor RimM.